We begin with the raw amino-acid sequence, 109 residues long: Fluoride-specific ion channel FluC (109 aa).

Transmembrane regions (helical) follow at residues 21-41 (FFLNNNLLVGVIGSFVYGFVI), 52-72 (ILLTGFCSCFTSFSGFVLFLY), and 83-103 (LFFYLNIIIVLNLIIMYAGFL).

This sequence belongs to the fluoride channel Fluc/FEX (TC 1.A.43) family.

Its subcellular location is the cell inner membrane. The catalysed reaction is fluoride(in) = fluoride(out). Its function is as follows. Fluoride-specific ion channel. Important for reducing fluoride concentration in the cell, thus reducing its toxicity. The chain is Fluoride-specific ion channel FluC from Prochlorococcus marinus (strain MIT 9515).